Reading from the N-terminus, the 134-residue chain is Small ribosomal subunit protein uS11 (134 aa).

Belongs to the universal ribosomal protein uS11 family. As to quaternary structure, part of the 30S ribosomal subunit. Interacts with proteins S7 and S18. Binds to IF-3.

Its function is as follows. Located on the platform of the 30S subunit, it bridges several disparate RNA helices of the 16S rRNA. Forms part of the Shine-Dalgarno cleft in the 70S ribosome. The chain is Small ribosomal subunit protein uS11 from Polaromonas naphthalenivorans (strain CJ2).